The following is an 81-amino-acid chain: Photosystem I iron-sulfur center (81 aa).

4Fe-4S ferredoxin-type domains follow at residues Ala2–Trp31 and Ile39–Tyr68. Cys11, Cys14, Cys17, Cys21, Cys48, Cys51, Cys54, and Cys58 together coordinate [4Fe-4S] cluster.

In terms of assembly, the eukaryotic PSI reaction center is composed of at least 11 subunits. [4Fe-4S] cluster serves as cofactor.

It localises to the plastid. Its subcellular location is the chloroplast thylakoid membrane. It carries out the reaction reduced [plastocyanin] + hnu + oxidized [2Fe-2S]-[ferredoxin] = oxidized [plastocyanin] + reduced [2Fe-2S]-[ferredoxin]. Its function is as follows. Apoprotein for the two 4Fe-4S centers FA and FB of photosystem I (PSI); essential for photochemical activity. FB is the terminal electron acceptor of PSI, donating electrons to ferredoxin. The C-terminus interacts with PsaA/B/D and helps assemble the protein into the PSI complex. Required for binding of PsaD and PsaE to PSI. PSI is a plastocyanin/cytochrome c6-ferredoxin oxidoreductase, converting photonic excitation into a charge separation, which transfers an electron from the donor P700 chlorophyll pair to the spectroscopically characterized acceptors A0, A1, FX, FA and FB in turn. The polypeptide is Photosystem I iron-sulfur center (Gracilaria tenuistipitata var. liui (Red alga)).